A 1977-amino-acid chain; its full sequence is Echinoderm microtubule-associated protein-like 5 (1977 aa).

10 WD repeats span residues Gly-59 to Val-100, Val-104 to Met-145, Gly-148 to Lys-187, Gly-195 to Gln-233, Ala-235 to Asp-273, Gly-280 to Gln-321, His-323 to Arg-362, Asp-406 to Gly-445, Gly-449 to Ser-488, and Gly-561 to Asp-601. Residues Glu-609–Leu-629 form a disordered region. Acidic residues predominate over residues Asn-615–Leu-629. WD repeat units lie at residues Gly-725–Ile-766, Tyr-770–Val-811, Gly-814–Lys-853, Gly-861–Lys-900, Ala-901–Ala-940, His-996–Ala-1035, Lys-1038–Ser-1077, His-1080–Val-1120, and Ala-1236–Lys-1276. Disordered stretches follow at residues Lys-1276–Asp-1297 and Pro-1323–Lys-1363. A compositionally biased stretch (acidic residues) spans Ser-1281 to Tyr-1294. Residues Gln-1326–Gly-1337 are compositionally biased toward basic and acidic residues. 10 WD repeats span residues Glu-1420–Ile-1471, Ser-1475–Ser-1516, Gly-1519–Lys-1558, Ala-1568–Ala-1606, Ala-1608–Arg-1654, Gly-1699–Lys-1739, Asn-1741–Arg-1782, Asp-1783–Arg-1822, Ala-1895–Lys-1934, and Gly-1940–His-1977.

The protein belongs to the WD repeat EMAP family.

Its subcellular location is the cytoplasm. The protein localises to the cytoskeleton. Its function is as follows. May modify the assembly dynamics of microtubules, such that microtubules are slightly longer, but more dynamic. The sequence is that of Echinoderm microtubule-associated protein-like 5 (Eml5) from Mus musculus (Mouse).